The sequence spans 237 residues: Phosphoribosylaminoimidazole-succinocarboxamide synthase (237 aa).

It belongs to the SAICAR synthetase family.

It catalyses the reaction 5-amino-1-(5-phospho-D-ribosyl)imidazole-4-carboxylate + L-aspartate + ATP = (2S)-2-[5-amino-1-(5-phospho-beta-D-ribosyl)imidazole-4-carboxamido]succinate + ADP + phosphate + 2 H(+). The protein operates within purine metabolism; IMP biosynthesis via de novo pathway; 5-amino-1-(5-phospho-D-ribosyl)imidazole-4-carboxamide from 5-amino-1-(5-phospho-D-ribosyl)imidazole-4-carboxylate: step 1/2. The polypeptide is Phosphoribosylaminoimidazole-succinocarboxamide synthase (Methanosarcina mazei (strain ATCC BAA-159 / DSM 3647 / Goe1 / Go1 / JCM 11833 / OCM 88) (Methanosarcina frisia)).